The primary structure comprises 133 residues: ATP synthase epsilon chain, chloroplastic (133 aa).

The protein belongs to the ATPase epsilon chain family. In terms of assembly, F-type ATPases have 2 components, CF(1) - the catalytic core - and CF(0) - the membrane proton channel. CF(1) has five subunits: alpha(3), beta(3), gamma(1), delta(1), epsilon(1). CF(0) has three main subunits: a, b and c.

The protein localises to the plastid. It localises to the chloroplast thylakoid membrane. Functionally, produces ATP from ADP in the presence of a proton gradient across the membrane. The polypeptide is ATP synthase epsilon chain, chloroplastic (Eucalyptus globulus subsp. globulus (Tasmanian blue gum)).